The primary structure comprises 69 residues: Cytochrome c oxidase subunit 8A, mitochondrial (69 aa).

The N-terminal 25 residues, 1 to 25 (MSVLTPLLLRGLTGPARRLPVPRAQ), are a transit peptide targeting the mitochondrion. The short motif at 2–19 (SVLTPLLLRGLTGPARRL) is the SIFI-degron element. The Mitochondrial matrix segment spans residues 26-36 (IHSKPPREQLG). Residues 37–60 (TMDIAIGLTSCFLCFLLPSGWVLS) form a helical membrane-spanning segment. Over 61 to 69 (HMENYKKRE) the chain is Mitochondrial intermembrane.

Belongs to the cytochrome c oxidase VIII family. Component of the cytochrome c oxidase (complex IV, CIV), a multisubunit enzyme composed of 14 subunits. The complex is composed of a catalytic core of 3 subunits MT-CO1, MT-CO2 and MT-CO3, encoded in the mitochondrial DNA, and 11 supernumerary subunits COX4I1 (or COX4I2), COX5A, COX5B, COX6A2 (or COX6A1), COX6B1 (or COX6B2), COX6C, COX7A1 (or COX7A2), COX7B, COX7C, COX8B and NDUFA4, which are encoded in the nuclear genome. The complex exists as a monomer or a dimer and forms supercomplexes (SCs) in the inner mitochondrial membrane with NADH-ubiquinone oxidoreductase (complex I, CI) and ubiquinol-cytochrome c oxidoreductase (cytochrome b-c1 complex, complex III, CIII), resulting in different assemblies (supercomplex SCI(1)III(2)IV(1) and megacomplex MCI(2)III(2)IV(2)). Post-translationally, in response to mitochondrial stress, the precursor protein is ubiquitinated by the SIFI complex in the cytoplasm before mitochondrial import, leading to its degradation. Within the SIFI complex, UBR4 initiates ubiquitin chain that are further elongated or branched by KCMF1.

It is found in the mitochondrion inner membrane. Its pathway is energy metabolism; oxidative phosphorylation. Component of the cytochrome c oxidase, the last enzyme in the mitochondrial electron transport chain which drives oxidative phosphorylation. The respiratory chain contains 3 multisubunit complexes succinate dehydrogenase (complex II, CII), ubiquinol-cytochrome c oxidoreductase (cytochrome b-c1 complex, complex III, CIII) and cytochrome c oxidase (complex IV, CIV), that cooperate to transfer electrons derived from NADH and succinate to molecular oxygen, creating an electrochemical gradient over the inner membrane that drives transmembrane transport and the ATP synthase. Cytochrome c oxidase is the component of the respiratory chain that catalyzes the reduction of oxygen to water. Electrons originating from reduced cytochrome c in the intermembrane space (IMS) are transferred via the dinuclear copper A center (CU(A)) of subunit 2 and heme A of subunit 1 to the active site in subunit 1, a binuclear center (BNC) formed by heme A3 and copper B (CU(B)). The BNC reduces molecular oxygen to 2 water molecules using 4 electrons from cytochrome c in the IMS and 4 protons from the mitochondrial matrix. The sequence is that of Cytochrome c oxidase subunit 8A, mitochondrial (COX8A) from Bos taurus (Bovine).